Reading from the N-terminus, the 177-residue chain is Crossover junction endodeoxyribonuclease RuvC (177 aa).

Catalysis depends on residues aspartate 8, glutamate 72, and aspartate 144. Positions 8, 72, and 144 each coordinate Mg(2+).

Belongs to the RuvC family. As to quaternary structure, homodimer which binds Holliday junction (HJ) DNA. The HJ becomes 2-fold symmetrical on binding to RuvC with unstacked arms; it has a different conformation from HJ DNA in complex with RuvA. In the full resolvosome a probable DNA-RuvA(4)-RuvB(12)-RuvC(2) complex forms which resolves the HJ. Mg(2+) serves as cofactor.

Its subcellular location is the cytoplasm. The enzyme catalyses Endonucleolytic cleavage at a junction such as a reciprocal single-stranded crossover between two homologous DNA duplexes (Holliday junction).. In terms of biological role, the RuvA-RuvB-RuvC complex processes Holliday junction (HJ) DNA during genetic recombination and DNA repair. Endonuclease that resolves HJ intermediates. Cleaves cruciform DNA by making single-stranded nicks across the HJ at symmetrical positions within the homologous arms, yielding a 5'-phosphate and a 3'-hydroxyl group; requires a central core of homology in the junction. The consensus cleavage sequence is 5'-(A/T)TT(C/G)-3'. Cleavage occurs on the 3'-side of the TT dinucleotide at the point of strand exchange. HJ branch migration catalyzed by RuvA-RuvB allows RuvC to scan DNA until it finds its consensus sequence, where it cleaves and resolves the cruciform DNA. The sequence is that of Crossover junction endodeoxyribonuclease RuvC from Teredinibacter turnerae (strain ATCC 39867 / T7901).